Consider the following 1517-residue polypeptide: DNA-directed RNA polymerase subunit beta' (1517 aa).

C71, C73, C86, and C89 together coordinate Zn(2+). Mg(2+)-binding residues include D482, D484, and D486. Zn(2+)-binding residues include C812, C886, C893, and C896.

It belongs to the RNA polymerase beta' chain family. As to quaternary structure, the RNAP catalytic core consists of 2 alpha, 1 beta, 1 beta' and 1 omega subunit. When a sigma factor is associated with the core the holoenzyme is formed, which can initiate transcription. Mg(2+) is required as a cofactor. It depends on Zn(2+) as a cofactor.

It catalyses the reaction RNA(n) + a ribonucleoside 5'-triphosphate = RNA(n+1) + diphosphate. Functionally, DNA-dependent RNA polymerase catalyzes the transcription of DNA into RNA using the four ribonucleoside triphosphates as substrates. This is DNA-directed RNA polymerase subunit beta' from Campylobacter jejuni subsp. jejuni serotype O:23/36 (strain 81-176).